The chain runs to 40 residues: Photosystem II reaction center protein L (40 aa).

Residues 19–39 form a helical membrane-spanning segment; the sequence is SLFLGLLLVFVLGILFSSYFF.

It belongs to the PsbL family. As to quaternary structure, PSII is composed of 1 copy each of membrane proteins PsbA, PsbB, PsbC, PsbD, PsbE, PsbF, PsbH, PsbI, PsbJ, PsbK, PsbL, PsbM, PsbT, PsbX, PsbY, PsbZ, Psb30/Ycf12, peripheral proteins PsbO, CyanoQ (PsbQ), PsbU, PsbV and a large number of cofactors. It forms dimeric complexes.

It is found in the cellular thylakoid membrane. In terms of biological role, one of the components of the core complex of photosystem II (PSII). PSII is a light-driven water:plastoquinone oxidoreductase that uses light energy to abstract electrons from H(2)O, generating O(2) and a proton gradient subsequently used for ATP formation. It consists of a core antenna complex that captures photons, and an electron transfer chain that converts photonic excitation into a charge separation. This subunit is found at the monomer-monomer interface and is required for correct PSII assembly and/or dimerization. This chain is Photosystem II reaction center protein L, found in Synechococcus elongatus (strain ATCC 33912 / PCC 7942 / FACHB-805) (Anacystis nidulans R2).